We begin with the raw amino-acid sequence, 403 residues long: Phosphopentomutase (403 aa).

Mn(2+) is bound by residues D13, D298, H303, D339, H340, and H351.

It belongs to the phosphopentomutase family. The cofactor is Mn(2+).

It localises to the cytoplasm. The catalysed reaction is 2-deoxy-alpha-D-ribose 1-phosphate = 2-deoxy-D-ribose 5-phosphate. It catalyses the reaction alpha-D-ribose 1-phosphate = D-ribose 5-phosphate. It participates in carbohydrate degradation; 2-deoxy-D-ribose 1-phosphate degradation; D-glyceraldehyde 3-phosphate and acetaldehyde from 2-deoxy-alpha-D-ribose 1-phosphate: step 1/2. Isomerase that catalyzes the conversion of deoxy-ribose 1-phosphate (dRib-1-P) and ribose 1-phosphate (Rib-1-P) to deoxy-ribose 5-phosphate (dRib-5-P) and ribose 5-phosphate (Rib-5-P), respectively. This Streptococcus pyogenes serotype M4 (strain MGAS10750) protein is Phosphopentomutase.